Reading from the N-terminus, the 420-residue chain is Serine protease inhibitor A3B (420 aa).

The N-terminal stretch at 1 to 17 is a signal peptide; the sequence is MAFIAALGLLMAEICPA. Residues Asn104 and Asn349 are each glycosylated (N-linked (GlcNAc...) asparagine). The segment at 367–392 is RCL; sequence GTEGDAITIVGYNFMSAKLKPVFVKF.

This sequence belongs to the serpin family.

The protein resides in the secreted. The chain is Serine protease inhibitor A3B (Serpina3b) from Mus musculus (Mouse).